The chain runs to 86 residues: U1-theraphotoxin-Pc1a (86 aa).

Positions 1-21 are cleaved as a signal peptide; the sequence is MMRVLIVTAVFTFFLVLTSSG. A propeptide spanning residues 22–49 is cleaved from the precursor; it reads HDEDNEQRNILEGMFLDRAIETPKGLEE. Cystine bridges form between Cys-53/Cys-70, Cys-60/Cys-75, and Cys-69/Cys-80. Val-84 is modified (valine amide).

As to expression, expressed by the venom gland.

It localises to the secreted. Its function is as follows. Possesses strong antiplasmodial activity against the intra-erythrocyte stage of P.falciparum in vitro. IC(50) for inhibiting P.falciparum growth is 1.59 uM. Interacts with infected and healthy erythrocytes. Does not lyse erythrocytes, is not cytotoxic to nucleated mammalian cells, and does not inhibit neuromuscular function. Has neither antibacterial nor antifungal activity. In Psalmopoeus cambridgei (Trinidad chevron tarantula), this protein is U1-theraphotoxin-Pc1a.